Consider the following 914-residue polypeptide: Protein translocase subunit SecA (914 aa).

Residues glutamine 87, glycine 105–threonine 109, and aspartate 508 contribute to the ATP site. Zn(2+)-binding residues include cysteine 898, cysteine 900, cysteine 909, and histidine 910.

The protein belongs to the SecA family. As to quaternary structure, monomer and homodimer. Part of the essential Sec protein translocation apparatus which comprises SecA, SecYEG and auxiliary proteins SecDF-YajC and YidC. Zn(2+) is required as a cofactor.

Its subcellular location is the cell inner membrane. It localises to the cytoplasm. The catalysed reaction is ATP + H2O + cellular proteinSide 1 = ADP + phosphate + cellular proteinSide 2.. Part of the Sec protein translocase complex. Interacts with the SecYEG preprotein conducting channel. Has a central role in coupling the hydrolysis of ATP to the transfer of proteins into and across the cell membrane, serving both as a receptor for the preprotein-SecB complex and as an ATP-driven molecular motor driving the stepwise translocation of polypeptide chains across the membrane. In Xylella fastidiosa (strain M23), this protein is Protein translocase subunit SecA.